The following is a 53-amino-acid chain: Cytochrome c-552 (53 aa).

Residues C19, C22, H23, and M44 each contribute to the heme c site.

Binds 1 heme c group covalently per subunit.

It is found in the cell membrane. The sequence is that of Cytochrome c-552 from Schinkia azotoformans (Bacillus azotoformans).